Here is a 660-residue protein sequence, read N- to C-terminus: Neurexin-2-beta (660 aa).

Residues 1 to 10 (MPPGGSGQGG) show a composition bias toward gly residues. The tract at residues 1–27 (MPPGGSGQGGCPRRPPALAGPLPPPPP) is disordered. The signal sequence occupies residues 1–46 (MPPGGSGQGGCPRRPPALAGPLPPPPPPPPLPLLLGLLLLLGAAEG). Residues 47–584 (ARVSSSLSTT…EVIRESSSTT (538 aa)) lie on the Extracellular side of the membrane. The 209-residue stretch at 87–295 (TTYIFGKGGA…HLRLVGEGPS (209 aa)) folds into the Laminin G-like domain. Ca(2+)-binding residues include aspartate 139 and valine 156. N-linked (GlcNAc...) asparagine glycosylation occurs at asparagine 186. Ca(2+) is bound by residues isoleucine 238 and asparagine 240. A glycan (O-linked (Xyl...) (heparan sulfate) serine) is linked at serine 350. Disordered regions lie at residues 408–458 (ATQD…LPPT) and 537–571 (EPRRPPPLRPGVTSAPGFPRLPTANPTGPGERGPP). The N-linked (GlcNAc...) asparagine glycan is linked to asparagine 561. The helical transmembrane segment at 585 to 605 (GMVVGIVAAAALCILILLYAM) threads the bilayer. Residues 606–660 (YKYRNRDEGSYQVDQSRNYISNSAQSNGAVVKEKAPAAPKTPSKAKKNKDKEYYV) are Cytoplasmic-facing. The tract at residues 627–660 (NSAQSNGAVVKEKAPAAPKTPSKAKKNKDKEYYV) is disordered.

It belongs to the neurexin family. Interacts (via cytoplasmic C-terminal region) with CASK. Specific isoforms bind alpha-dystroglycan and neuroligins NLGN1, NLGN2 and NLGN3. Interacts with CBLN1, CBLN2 and, less avidly, with CBLN4. Interacts with CLSTN3. In terms of processing, O-glycosylated; contains heparan sulfate. Heparan sulfate attachment is required for synapse development by mediating interactions with neuroligins.

Its subcellular location is the presynaptic cell membrane. In terms of biological role, neuronal cell surface protein that may be involved in cell recognition and cell adhesion. The polypeptide is Neurexin-2-beta (Mus musculus (Mouse)).